The primary structure comprises 191 residues: Glutathione-independent glyoxalase DJ-1 (191 aa).

Catalysis depends on residues Glu-16, Cys-111, and His-130.

This sequence belongs to the peptidase C56 family.

Its subcellular location is the cytoplasm. It localises to the nucleus. The enzyme catalyses methylglyoxal + H2O = (R)-lactate + H(+). Catalyzes the conversion of methylglyoxal (MG) to D-lactate in a single glutathione (GSH)-independent step. May play a role in detoxifying endogenously produced glyoxals. Involved in protection against reactive oxygen species (ROS). This is Glutathione-independent glyoxalase DJ-1 from Schizosaccharomyces pombe (strain 972 / ATCC 24843) (Fission yeast).